The sequence spans 202 residues: ATP-dependent Clp protease proteolytic subunit 2 (202 aa).

Serine 99 acts as the Nucleophile in catalysis. Residue histidine 124 is part of the active site.

It belongs to the peptidase S14 family. In terms of assembly, fourteen ClpP subunits assemble into 2 heptameric rings which stack back to back to give a disk-like structure with a central cavity, resembling the structure of eukaryotic proteasomes.

Its subcellular location is the cytoplasm. The catalysed reaction is Hydrolysis of proteins to small peptides in the presence of ATP and magnesium. alpha-casein is the usual test substrate. In the absence of ATP, only oligopeptides shorter than five residues are hydrolyzed (such as succinyl-Leu-Tyr-|-NHMec, and Leu-Tyr-Leu-|-Tyr-Trp, in which cleavage of the -Tyr-|-Leu- and -Tyr-|-Trp bonds also occurs).. Cleaves peptides in various proteins in a process that requires ATP hydrolysis. Has a chymotrypsin-like activity. Plays a major role in the degradation of misfolded proteins. The sequence is that of ATP-dependent Clp protease proteolytic subunit 2 from Desulfitobacterium hafniense (strain Y51).